The following is a 377-amino-acid chain: uncharacterized protein (377 aa).

This is an uncharacterized protein from Magallana gigas (Pacific oyster).